The chain runs to 147 residues: Transthyretin (147 aa).

The signal sequence occupies residues Met1–Ala20. Cys30 is modified (sulfocysteine). Lys35 contributes to the L-thyroxine binding site. Ser72 is modified (phosphoserine). Glu74 serves as a coordination point for L-thyroxine. Residue Asn118 is glycosylated (N-linked (GlcNAc...) asparagine). Ser137 contributes to the L-thyroxine binding site.

Belongs to the transthyretin family. In terms of assembly, homotetramer. Dimer of dimers. In the homotetramer, subunits assemble around a central channel that can accommodate two ligand molecules. Interacts with RBP4. Sulfonation of the reactive cysteine Cys-30 enhances the stability of the native conformation of TTR, avoiding misassembly of the protein leading to amyloid formation.

Its subcellular location is the secreted. Thyroid hormone-binding protein. Probably transports thyroxine from the bloodstream to the brain. The polypeptide is Transthyretin (TTR) (Macaca fascicularis (Crab-eating macaque)).